The primary structure comprises 173 residues: Spermidine N(1)-acetyltransferase (173 aa).

The N-acetyltransferase domain occupies leucine 5–tyrosine 162. Residues methionine 28, glutamate 33, glutamate 41, and histidine 49–aspartate 52 each bind spermine. Position 33 (glutamate 33) interacts with Mg(2+). Residues glutamate 33 and glutamate 41 each coordinate spermidine. Glutamate 75 lines the Mg(2+) pocket. Residue glutamate 84–glutamine 86 coordinates spermine. Acetyl-CoA contacts are provided by residues isoleucine 87–isoleucine 89, glutamine 94–arginine 100, and asparagine 127–glutamate 136. Tyrosine 134 (proton donor) is an active-site residue.

The protein belongs to the acetyltransferase family. As to quaternary structure, homododecamer; dimer of hexamers. Exists in solution in a variety of protein homooligomeric states including dodecamers in an open state. The presence of the polyamines spermidine or spermine shifts the equilibrium to dodecamers and induces the formation of the closed, symmetric dodecamers.

It localises to the cytoplasm. It catalyses the reaction an alkane-alpha,omega-diamine + acetyl-CoA = an N-acetylalkane-alpha,omega-diamine + CoA + H(+). The catalysed reaction is spermidine + acetyl-CoA = N(1)-acetylspermidine + CoA + H(+). It carries out the reaction spermidine + acetyl-CoA = N(8)-acetylspermidine + CoA + H(+). The enzyme catalyses spermine + acetyl-CoA = N(1)-acetylspermine + CoA + H(+). It functions in the pathway amine and polyamine degradation; spermidine degradation. Its pathway is amine and polyamine degradation; spermine degradation. Allosterically regulated by polyamines. Polyamines trigger conformational changes and induce the symmetric closed dodecameric state of the protein when they bind to their allosteric sites. In terms of biological role, involved in the protection against polyamine toxicity by regulating their concentration. Catalyzes the transfer of an acetyl group from acetyl coenzyme A (AcCoA) to the primary amino groups of spermidine to yield N(1)- and N(8)-acetylspermidine. It can use polyamines such as spermine and N(1)-acetylspermine, but not putrescine or cadaverine. The sequence is that of Spermidine N(1)-acetyltransferase (speG) from Vibrio cholerae serotype O1 (strain ATCC 39315 / El Tor Inaba N16961).